The primary structure comprises 52 residues: Conotoxin reg3h (52 aa).

Residue Ala1 is a signal peptide. A propeptide spanning residues 2–33 (LPLDGDQPADQPAERMQDISPELNPLFHPVKR) is cleaved from the precursor. 3 cysteine pairs are disulfide-bonded: Cys35/Cys49, Cys36/Cys47, and Cys41/Cys50. 4-hydroxyproline is present on residues Pro38, Pro48, and Pro51. Asn52 is subject to Asparagine amide.

As to expression, expressed by the venom duct.

The protein localises to the secreted. The polypeptide is Conotoxin reg3h (Conus regius (Crown cone)).